The following is a 156-amino-acid chain: Small ribosomal subunit protein uS7 (156 aa).

This sequence belongs to the universal ribosomal protein uS7 family. In terms of assembly, part of the 30S ribosomal subunit. Contacts proteins S9 and S11.

Its function is as follows. One of the primary rRNA binding proteins, it binds directly to 16S rRNA where it nucleates assembly of the head domain of the 30S subunit. Is located at the subunit interface close to the decoding center, probably blocks exit of the E-site tRNA. In Acinetobacter baumannii (strain AB307-0294), this protein is Small ribosomal subunit protein uS7.